A 336-amino-acid polypeptide reads, in one-letter code: USG-1 protein homolog (336 aa).

The protein belongs to the aspartate-semialdehyde dehydrogenase family.

In Pseudomonas aeruginosa (strain ATCC 15692 / DSM 22644 / CIP 104116 / JCM 14847 / LMG 12228 / 1C / PRS 101 / PAO1), this protein is USG-1 protein homolog (usg).